The chain runs to 359 residues: Holliday junction branch migration complex subunit RuvB (359 aa).

Residues methionine 1–valine 22 are disordered. The segment at glycine 13–tyrosine 204 is large ATPase domain (RuvB-L). ATP contacts are provided by leucine 43, arginine 44, glycine 85, lysine 88, threonine 89, threonine 90, arginine 194, tyrosine 204, and arginine 241. Threonine 89 provides a ligand contact to Mg(2+). A small ATPAse domain (RuvB-S) region spans residues glycine 205 to arginine 276. Residues glycine 279–alanine 359 are head domain (RuvB-H). Residues arginine 334 and arginine 339 each contribute to the DNA site.

It belongs to the RuvB family. In terms of assembly, homohexamer. Forms an RuvA(8)-RuvB(12)-Holliday junction (HJ) complex. HJ DNA is sandwiched between 2 RuvA tetramers; dsDNA enters through RuvA and exits via RuvB. An RuvB hexamer assembles on each DNA strand where it exits the tetramer. Each RuvB hexamer is contacted by two RuvA subunits (via domain III) on 2 adjacent RuvB subunits; this complex drives branch migration. In the full resolvosome a probable DNA-RuvA(4)-RuvB(12)-RuvC(2) complex forms which resolves the HJ.

The protein localises to the cytoplasm. It carries out the reaction ATP + H2O = ADP + phosphate + H(+). Its function is as follows. The RuvA-RuvB-RuvC complex processes Holliday junction (HJ) DNA during genetic recombination and DNA repair, while the RuvA-RuvB complex plays an important role in the rescue of blocked DNA replication forks via replication fork reversal (RFR). RuvA specifically binds to HJ cruciform DNA, conferring on it an open structure. The RuvB hexamer acts as an ATP-dependent pump, pulling dsDNA into and through the RuvAB complex. RuvB forms 2 homohexamers on either side of HJ DNA bound by 1 or 2 RuvA tetramers; 4 subunits per hexamer contact DNA at a time. Coordinated motions by a converter formed by DNA-disengaged RuvB subunits stimulates ATP hydrolysis and nucleotide exchange. Immobilization of the converter enables RuvB to convert the ATP-contained energy into a lever motion, pulling 2 nucleotides of DNA out of the RuvA tetramer per ATP hydrolyzed, thus driving DNA branch migration. The RuvB motors rotate together with the DNA substrate, which together with the progressing nucleotide cycle form the mechanistic basis for DNA recombination by continuous HJ branch migration. Branch migration allows RuvC to scan DNA until it finds its consensus sequence, where it cleaves and resolves cruciform DNA. This is Holliday junction branch migration complex subunit RuvB from Synechococcus sp. (strain CC9311).